A 386-amino-acid polypeptide reads, in one-letter code: Flap endonuclease 1 (386 aa).

The N-domain stretch occupies residues 1-104; sequence MGILGLSKLI…GELAKRAERR (104 aa). Aspartate 34 is a Mg(2+) binding site. DNA-binding residues include arginine 47 and arginine 70. Mg(2+) is bound by residues aspartate 86, glutamate 158, glutamate 160, aspartate 179, and aspartate 181. The I-domain stretch occupies residues 122-253; that stretch reads EIEKFNRRLV…KRAIELINNY (132 aa). Residue glutamate 158 participates in DNA binding. Residues glycine 231 and aspartate 233 each coordinate DNA. A Mg(2+)-binding site is contributed by aspartate 233. The segment at 336 to 344 is interaction with PCNA; that stretch reads TQVRLDSFF. Positions 351–386 are disordered; the sequence is PNAVHAAKRKAEEAKKSANNKKAKTSGGAARGRRPK.

The protein belongs to the XPG/RAD2 endonuclease family. FEN1 subfamily. In terms of assembly, interacts with PCNA. Three molecules of FEN1 bind to one PCNA trimer with each molecule binding to one PCNA monomer. PCNA stimulates the nuclease activity without altering cleavage specificity. It depends on Mg(2+) as a cofactor. Phosphorylated. Phosphorylation upon DNA damage induces relocalization to the nuclear plasma.

It is found in the nucleus. Its subcellular location is the nucleolus. The protein localises to the nucleoplasm. The protein resides in the mitochondrion. Functionally, structure-specific nuclease with 5'-flap endonuclease and 5'-3' exonuclease activities involved in DNA replication and repair. During DNA replication, cleaves the 5'-overhanging flap structure that is generated by displacement synthesis when DNA polymerase encounters the 5'-end of a downstream Okazaki fragment. It enters the flap from the 5'-end and then tracks to cleave the flap base, leaving a nick for ligation. Also involved in the long patch base excision repair (LP-BER) pathway, by cleaving within the apurinic/apyrimidinic (AP) site-terminated flap. Acts as a genome stabilization factor that prevents flaps from equilibrating into structures that lead to duplications and deletions. Also possesses 5'-3' exonuclease activity on nicked or gapped double-stranded DNA, and exhibits RNase H activity. Also involved in replication and repair of rDNA and in repairing mitochondrial DNA. This is Flap endonuclease 1 from Drosophila persimilis (Fruit fly).